The following is a 271-amino-acid chain: Inactive phospholipid phosphatase 7 (271 aa).

The segment at 1–69 is disordered; it reads MPVSQSRARA…RQSQQLPEED (69 aa). The Cytoplasmic portion of the chain corresponds to 1–112; sequence MPVSQSRARA…AASWASARSM (112 aa). Residues 24–36 are compositionally biased toward polar residues; sequence SLNQPPKGTQEPR. Residues S43 and S62 each carry the phosphoserine modification. The interaction with MTOR stretch occupies residues 70–91; sequence CMQLNPSFKGIAFNSLLAIDIC. A helical transmembrane segment spans residues 113 to 133; sequence VKLIGITSHGIPWIGGTILCL. The Extracellular segment spans residues 134 to 141; sequence VRSSTLAG. A helical membrane pass occupies residues 142-162; sequence QEVLMNLLLALLLDIMTVAGV. The Cytoplasmic portion of the chain corresponds to 163–202; sequence QKLIKRRGPYETSPGLLDYLTMDIYAFPAGHASRAAMVSK. A helical transmembrane segment spans residues 203–223; sequence FFLSHLVLAVPLRVLLVLWAF. The Extracellular segment spans residues 224–239; the sequence is CVGLSRVMIGRHHITD. Residues 240 to 260 form a helical membrane-spanning segment; sequence VISGFIIGYFQFRLVELVWMS. At 261 to 271 the chain is on the cytoplasmic side; it reads SNTCQMLISAW.

Belongs to the PA-phosphatase related phosphoesterase family. In terms of assembly, homo- and heterooligomer. Interacts with MTOR; controls MTOR-dependent IGF2 expression during myoblast differentiation.

The protein resides in the nucleus envelope. It localises to the endoplasmic reticulum membrane. Its subcellular location is the membrane. Functionally, plays a role as negative regulator of myoblast differentiation, in part through effects on MTOR signaling. Has no detectable enzymatic activity. The polypeptide is Inactive phospholipid phosphatase 7 (Rattus norvegicus (Rat)).